Reading from the N-terminus, the 612-residue chain is UvrABC system protein C (612 aa).

The 80-residue stretch at 13–92 (AKPGVYIMHD…IKEHRPKYNT (80 aa)) folds into the GIY-YIG domain. The UVR domain maps to 204–239 (KKIMDRLTTQMQEASEKMEYEEAARYRDLLMSVKQV).

This sequence belongs to the UvrC family. Interacts with UvrB in an incision complex.

Its subcellular location is the cytoplasm. Its function is as follows. The UvrABC repair system catalyzes the recognition and processing of DNA lesions. UvrC both incises the 5' and 3' sides of the lesion. The N-terminal half is responsible for the 3' incision and the C-terminal half is responsible for the 5' incision. This is UvrABC system protein C from Lachnospira eligens (strain ATCC 27750 / DSM 3376 / VPI C15-48 / C15-B4) (Eubacterium eligens).